Reading from the N-terminus, the 436-residue chain is GTPase Der (436 aa).

EngA-type G domains follow at residues 4-167 and 175-351; these read PTVA…PTEA and IKFS…QSQN. Residues 10–17, 57–61, 119–122, 181–188, 229–233, and 294–297 each bind GTP; these read GRPNVGKS, DTGGI, NKVD, DTAGM, and NKWD. Positions 352–436 constitute a KH-like domain; that stretch reads TRIPSAVLND…PIRLIARKRK (85 aa).

It belongs to the TRAFAC class TrmE-Era-EngA-EngB-Septin-like GTPase superfamily. EngA (Der) GTPase family. As to quaternary structure, associates with the 50S ribosomal subunit.

Functionally, GTPase that plays an essential role in the late steps of ribosome biogenesis. This is GTPase Der from Streptococcus mutans serotype c (strain ATCC 700610 / UA159).